Here is a 277-residue protein sequence, read N- to C-terminus: 3-methyl-2-oxobutanoate hydroxymethyltransferase (277 aa).

Residues D43 and D82 each contribute to the Mg(2+) site. 3-methyl-2-oxobutanoate contacts are provided by residues 43 to 44, D82, and K112; that span reads DS. E114 serves as a coordination point for Mg(2+). E181 serves as the catalytic Proton acceptor.

Belongs to the PanB family. In terms of assembly, homodecamer; pentamer of dimers. It depends on Mg(2+) as a cofactor.

It is found in the cytoplasm. The enzyme catalyses 3-methyl-2-oxobutanoate + (6R)-5,10-methylene-5,6,7,8-tetrahydrofolate + H2O = 2-dehydropantoate + (6S)-5,6,7,8-tetrahydrofolate. The protein operates within cofactor biosynthesis; (R)-pantothenate biosynthesis; (R)-pantoate from 3-methyl-2-oxobutanoate: step 1/2. Functionally, catalyzes the reversible reaction in which hydroxymethyl group from 5,10-methylenetetrahydrofolate is transferred onto alpha-ketoisovalerate to form ketopantoate. The chain is 3-methyl-2-oxobutanoate hydroxymethyltransferase from Bacillus subtilis (strain 168).